A 165-amino-acid polypeptide reads, in one-letter code: MNSLENLILIGIIKSCHGIQGHVILRSFTEPATKILERNLVNESGADIRIKLISQNAKGELICTFNDITTRNEAENLKGYKIFCLRTSLPELEEDEFYIADLNHLRILDQYNKEIGKIKNILNFGAGDIIEIEFLDKTTKLLPFNKEFFPTITKDYVILNYQTKV.

A PRC barrel domain is found at 94-165 (EDEFYIADLN…YVILNYQTKV (72 aa)).

Belongs to the RimM family. Binds ribosomal protein uS19.

It localises to the cytoplasm. An accessory protein needed during the final step in the assembly of 30S ribosomal subunit, possibly for assembly of the head region. Essential for efficient processing of 16S rRNA. May be needed both before and after RbfA during the maturation of 16S rRNA. It has affinity for free ribosomal 30S subunits but not for 70S ribosomes. This Rickettsia typhi (strain ATCC VR-144 / Wilmington) protein is Ribosome maturation factor RimM.